The chain runs to 89 residues: MAKKSKIAKEMKREKLVNQYYELRKELKAKGDYEALRKLPRDSSPTRLTRRCKVTGRPRGVLRKFEMSRIAFREHAHKGQIPGVKKSSW.

This sequence belongs to the universal ribosomal protein uS14 family. As to quaternary structure, part of the 30S ribosomal subunit. Contacts proteins S3 and S10.

In terms of biological role, binds 16S rRNA, required for the assembly of 30S particles and may also be responsible for determining the conformation of the 16S rRNA at the A site. The polypeptide is Small ribosomal subunit protein uS14A (Staphylococcus haemolyticus (strain JCSC1435)).